The following is a 613-amino-acid chain: Laccase 1 (613 aa).

The N-terminal stretch at 1–20 is a signal peptide; the sequence is MSSSVRLLLIVALLYTNSWA. Plastocyanin-like domains are found at residues 29 to 142, 171 to 359, and 468 to 598; these read ITWE…IRPK, YLVV…MRVP, and DATC…ILDG. Residue N74 is glycosylated (N-linked (GlcNAc...) asparagine). Positions 78, 80, 122, and 124 each coordinate Cu cation. N-linked (GlcNAc...) asparagine glycosylation is found at N256, N279, and N484. Cu cation is bound by residues H506, H509, and H511. The N-linked (GlcNAc...) asparagine glycan is linked to N526. Cu cation-binding residues include H580, C581, H582, and H586.

It belongs to the multicopper oxidase family. Requires Cu cation as cofactor.

The protein localises to the cell surface. The protein operates within pigment biosynthesis. Functionally, laccase; part of the Pks1 gene cluster that mediates the biosynthesis of an anthraquinone derivative pigment that contributes to conidial pigmentation that provides protection from UV radiation, heat and cold stress. The polyketide synthase Pks1 produces 1-acetyl-2,4,6,8-tetrahydroxy-9,10-anthraquinone though condensation of acetyl-CoA with malonyl-CoA. The dehydratase EthD and the laccase Mlac1 further convert the anthraquinone derivative into the final conidial pigment. This is Laccase 1 from Metarhizium acridum (strain CQMa 102).